The sequence spans 179 residues: Putative endogenous retrovirus group FC1 Env polyprotein (179 aa).

A signal peptide spans 1 to 22 (MARPSPLCLLLLLTLLPPIVPS). The truncated surface protein stretch occupies residues 23–179 (NSLLTEPPFR…SKLRIFRTYV (157 aa)). Residue N69 is glycosylated (N-linked (GlcNAc...) asparagine).

The protein belongs to the gamma type-C retroviral envelope protein family. HERV class-I F(c)1 env subfamily.

It is found in the virion. In terms of biological role, retroviral envelope proteins mediate receptor recognition and membrane fusion during early infection. Endogenous envelope proteins may have kept, lost or modified their original function during evolution. The protein is Putative endogenous retrovirus group FC1 Env polyprotein (ERVFC1) of Gorilla gorilla gorilla (Western lowland gorilla).